A 621-amino-acid chain; its full sequence is Chaperone protein HscA homolog (621 aa).

This sequence belongs to the heat shock protein 70 family.

Chaperone involved in the maturation of iron-sulfur cluster-containing proteins. Has a low intrinsic ATPase activity which is markedly stimulated by HscB. This is Chaperone protein HscA homolog from Cupriavidus taiwanensis (strain DSM 17343 / BCRC 17206 / CCUG 44338 / CIP 107171 / LMG 19424 / R1) (Ralstonia taiwanensis (strain LMG 19424)).